A 90-amino-acid polypeptide reads, in one-letter code: U-scoloptoxin(15)-Sa3a (90 aa).

A signal peptide spans 1-18; the sequence is MKMVYLGLFLIITSCVIS.

It belongs to the scoloptoxin-15 family. Contains 3 disulfide bonds. Expressed by the venom gland.

It localises to the secreted. In Scolopendra alternans (Florida Keys giant centipede), this protein is U-scoloptoxin(15)-Sa3a.